Consider the following 241-residue polypeptide: tRNA (guanine-N(1)-)-methyltransferase (241 aa).

S-adenosyl-L-methionine-binding positions include Gly-123 and 143–148; that span reads IGDYVL.

The protein belongs to the RNA methyltransferase TrmD family. In terms of assembly, homodimer.

The protein resides in the cytoplasm. It catalyses the reaction guanosine(37) in tRNA + S-adenosyl-L-methionine = N(1)-methylguanosine(37) in tRNA + S-adenosyl-L-homocysteine + H(+). Specifically methylates guanosine-37 in various tRNAs. In Roseobacter denitrificans (strain ATCC 33942 / OCh 114) (Erythrobacter sp. (strain OCh 114)), this protein is tRNA (guanine-N(1)-)-methyltransferase.